We begin with the raw amino-acid sequence, 185 residues long: HTH-type transcriptional regulator SA2364 (185 aa).

In terms of domain architecture, HTH tetR-type spans 6 to 66; it reads KENRQRIEEI…YVIQRDLDIF (61 aa). Positions 29–48 form a DNA-binding region, H-T-H motif; sequence SMNRIAKELGIGMGTLYRHF.

The sequence is that of HTH-type transcriptional regulator SA2364 from Staphylococcus aureus (strain N315).